The chain runs to 137 residues: Ribosome-binding factor A (137 aa).

The protein belongs to the RbfA family. In terms of assembly, monomer. Binds 30S ribosomal subunits, but not 50S ribosomal subunits or 70S ribosomes.

Its subcellular location is the cytoplasm. In terms of biological role, one of several proteins that assist in the late maturation steps of the functional core of the 30S ribosomal subunit. Associates with free 30S ribosomal subunits (but not with 30S subunits that are part of 70S ribosomes or polysomes). Required for efficient processing of 16S rRNA. May interact with the 5'-terminal helix region of 16S rRNA. This Shewanella amazonensis (strain ATCC BAA-1098 / SB2B) protein is Ribosome-binding factor A.